A 247-amino-acid polypeptide reads, in one-letter code: Dof zinc finger protein DOF3.5 (247 aa).

The Dof-type zinc-finger motif lies at 25–79; sequence PSCPRCGSSNTKFCYYNNYSLTQPRYFCKGCRRYWTKGGSLRNVPVGGGCRKSRR. Residues Cys27, Cys30, Cys52, and Cys55 each coordinate Zn(2+). The interval 70 to 100 is disordered; it reads VGGGCRKSRRPKSSSGNNTKTSLTANSGNPG. Residues 82–94 show a composition bias toward polar residues; that stretch reads SSSGNNTKTSLTA.

The protein localises to the nucleus. Functionally, transcription factor that binds specifically to a 5'-AA[AG]G-3' consensus core sequence. The protein is Dof zinc finger protein DOF3.5 (DOF3.5) of Arabidopsis thaliana (Mouse-ear cress).